The chain runs to 1111 residues: Protein STU1 (1111 aa).

HEAT repeat units follow at residues 95–133 and 167–205; these read ALPL…ERSV and YVPT…KSDL. Disordered regions lie at residues 225–245 and 476–751; these read ELNP…VEPS and RLLQ…VDEE. A compositionally biased stretch (polar residues) spans 502–511; it reads SKSTMGTSKP. A compositionally biased stretch (basic and acidic residues) spans 704 to 714; sequence PREEQRFVKPV.

Belongs to the CLASP family. As to quaternary structure, interacts with microtubules.

Its subcellular location is the cytoplasm. It localises to the cytoskeleton. The protein localises to the nucleus. The protein resides in the spindle. In terms of biological role, microtubule binding protein that promotes the stabilization of dynamic microtubules. Required for mitotic spindle formation. The sequence is that of Protein STU1 (STU1) from Chaetomium globosum (strain ATCC 6205 / CBS 148.51 / DSM 1962 / NBRC 6347 / NRRL 1970) (Soil fungus).